Here is a 310-residue protein sequence, read N- to C-terminus: Syntaxin-81 (310 aa).

At 1–289 (MSRFRDRTED…QAIQRNSSSR (289 aa)) the chain is on the cytoplasmic side. A coiled-coil region spans residues 77 to 114 (RTTEQEKDSIEQEVAAFIKACKEQIDILINSIRNEEAN). A helical; Anchor for type IV membrane protein membrane pass occupies residues 290 to 310 (TFLLLFFFVLTFSVLFLDWYS).

It belongs to the syntaxin family. As to quaternary structure, part of the t-SNARE complex. Interacts with MAG2.

It localises to the membrane. Its function is as follows. Vesicle trafficking protein that functions in the secretory pathway. This chain is Syntaxin-81 (SYP81), found in Arabidopsis thaliana (Mouse-ear cress).